The primary structure comprises 345 residues: Phenylalanine--tRNA ligase alpha subunit (345 aa).

Glu272 is a Mg(2+) binding site.

It belongs to the class-II aminoacyl-tRNA synthetase family. Phe-tRNA synthetase alpha subunit type 1 subfamily. As to quaternary structure, tetramer of two alpha and two beta subunits. Mg(2+) serves as cofactor.

It is found in the cytoplasm. The enzyme catalyses tRNA(Phe) + L-phenylalanine + ATP = L-phenylalanyl-tRNA(Phe) + AMP + diphosphate + H(+). The protein is Phenylalanine--tRNA ligase alpha subunit of Prochlorococcus marinus (strain MIT 9312).